The primary structure comprises 126 residues: Large ribosomal subunit protein bL12 (126 aa).

It belongs to the bacterial ribosomal protein bL12 family. In terms of assembly, homodimer. Part of the ribosomal stalk of the 50S ribosomal subunit. Forms a multimeric L10(L12)X complex, where L10 forms an elongated spine to which 2 to 4 L12 dimers bind in a sequential fashion. Binds GTP-bound translation factors.

Its function is as follows. Forms part of the ribosomal stalk which helps the ribosome interact with GTP-bound translation factors. Is thus essential for accurate translation. The chain is Large ribosomal subunit protein bL12 from Blochmanniella floridana.